The sequence spans 482 residues: tRNA sulfurtransferase (482 aa).

Positions 61–165 (LTIRDALTRI…DDRLLLIKGR (105 aa)) constitute a THUMP domain. ATP contacts are provided by residues 183–184 (LI), lysine 265, glycine 287, and glutamine 296. A disulfide bridge connects residues cysteine 344 and cysteine 456. The Rhodanese domain maps to 404 to 482 (CGPNDVILDI…GFNNVKVYRP (79 aa)). Cysteine 456 serves as the catalytic Cysteine persulfide intermediate.

Belongs to the ThiI family.

The protein localises to the cytoplasm. It catalyses the reaction [ThiI sulfur-carrier protein]-S-sulfanyl-L-cysteine + a uridine in tRNA + 2 reduced [2Fe-2S]-[ferredoxin] + ATP + H(+) = [ThiI sulfur-carrier protein]-L-cysteine + a 4-thiouridine in tRNA + 2 oxidized [2Fe-2S]-[ferredoxin] + AMP + diphosphate. The catalysed reaction is [ThiS sulfur-carrier protein]-C-terminal Gly-Gly-AMP + S-sulfanyl-L-cysteinyl-[cysteine desulfurase] + AH2 = [ThiS sulfur-carrier protein]-C-terminal-Gly-aminoethanethioate + L-cysteinyl-[cysteine desulfurase] + A + AMP + 2 H(+). It participates in cofactor biosynthesis; thiamine diphosphate biosynthesis. In terms of biological role, catalyzes the ATP-dependent transfer of a sulfur to tRNA to produce 4-thiouridine in position 8 of tRNAs, which functions as a near-UV photosensor. Also catalyzes the transfer of sulfur to the sulfur carrier protein ThiS, forming ThiS-thiocarboxylate. This is a step in the synthesis of thiazole, in the thiamine biosynthesis pathway. The sulfur is donated as persulfide by IscS. This Shigella dysenteriae serotype 1 (strain Sd197) protein is tRNA sulfurtransferase.